The following is a 130-amino-acid chain: P antigen family member 5 (130 aa).

Disordered stretches follow at residues 1–88 and 101–130; these read MQAP…TDVE and DAPG…EGQL. Over residues 14-26 the composition is skewed to basic and acidic residues; it reads TREEVRDMSEHVT. The segment covering 27–42 has biased composition (polar residues); that stretch reads RSQSSERGNDQESSQP. Phosphothreonine is present on residues Thr113 and Thr116.

Belongs to the GAGE family.

The sequence is that of P antigen family member 5 (PAGE5) from Homo sapiens (Human).